A 333-amino-acid polypeptide reads, in one-letter code: NAC domain-containing protein 26 (333 aa).

Residues 14-173 form the NAC domain; it reads LPPGFRFHPT…DWAVCRIFHK (160 aa). A DNA-binding region spans residues 114–179; the sequence is IGMKKTLVFY…IFHKSSGIKK (66 aa). The tract at residues 143-162 is disordered; sequence ADASPPQPPPPPSSAEPPRQ. A compositionally biased stretch (pro residues) spans 147–157; it reads PPQPPPPPSSA.

In terms of assembly, forms homodimers. Forms heterodimers with NAC20. Forms heterodimers with NAC23. As to expression, expressed in developing seeds.

The protein localises to the nucleus. Its function is as follows. Transcription factor that acts redundantly with NAC20 to regulate the expression of genes involved in the biosynthesis of starch and storage proteins in grain. Directly binds to the promoters of starch synthase 1 (SS1), pullulanase (PUL), glutelin A1 (GLUA1), glutelins B4 and B5 (GLUB4 and GLUB5), alpha-globulin and 16 kDa prolamin, and activates their expression. Possesses transactivation activity in yeast. The protein is NAC domain-containing protein 26 of Oryza sativa subsp. indica (Rice).